Consider the following 122-residue polypeptide: Large ribosomal subunit protein uL14 (122 aa).

Belongs to the universal ribosomal protein uL14 family. Part of the 50S ribosomal subunit. Forms a cluster with proteins L3 and L19. In the 70S ribosome, L14 and L19 interact and together make contacts with the 16S rRNA in bridges B5 and B8.

In terms of biological role, binds to 23S rRNA. Forms part of two intersubunit bridges in the 70S ribosome. This is Large ribosomal subunit protein uL14 from Pelodictyon phaeoclathratiforme (strain DSM 5477 / BU-1).